The following is a 480-amino-acid chain: Prostacyclin synthase (480 aa).

The chain crosses the membrane as a helical span at residues 1–21 (MMWTALLLVGLSILVIVLYGR). Residues arginine 104, leucine 110, asparagine 277, 338 to 339 (TR), and arginine 362 each bind substrate. Heme is bound at residue cysteine 421.

Belongs to the cytochrome P450 family. Requires heme as cofactor.

Its subcellular location is the endoplasmic reticulum membrane. The enzyme catalyses prostaglandin H2 = prostaglandin I2. It catalyses the reaction a hydroperoxyeicosatetraenoate = an oxoeicosatetraenoate + H2O. It carries out the reaction (15S)-hydroperoxy-(5Z,8Z,11Z,13E)-eicosatetraenoate = 15-oxo-(5Z,8Z,11Z,13E)-eicosatetraenoate + H2O. The catalysed reaction is (15S)-hydroperoxy-(5Z,8Z,11Z,13E)-eicosatetraenoate + AH2 = (15S)-hydroxy-(5Z,8Z,11Z,13E)-eicosatetraenoate + A + H2O. Its function is as follows. Catalyzes the isomerization of prostaglandin H2 to prostacyclin (= prostaglandin I2). In terms of biological role, catalyzes the biosynthesis and metabolism of eicosanoids. Catalyzes the isomerization of prostaglandin H2 to prostacyclin (= prostaglandin I2), a potent mediator of vasodilation and inhibitor of platelet aggregation. Additionally, displays dehydratase activity, toward hydroperoxyeicosatetraenoates (HPETEs), especially toward (15S)-hydroperoxy-(5Z,8Z,11Z,13E)-eicosatetraenoate (15(S)-HPETE). The polypeptide is Prostacyclin synthase (Danio rerio (Zebrafish)).